The following is a 164-amino-acid chain: Phosphopantetheine adenylyltransferase (164 aa).

Ser9 is a binding site for substrate. ATP contacts are provided by residues 9–10 and His17; that span reads SF. Substrate-binding residues include Lys41, Leu73, and Arg87. ATP is bound by residues Glu98 and 122–128; that span reads YSFLSSS.

This sequence belongs to the bacterial CoaD family. Homohexamer. The cofactor is Mg(2+).

It is found in the cytoplasm. It catalyses the reaction (R)-4'-phosphopantetheine + ATP + H(+) = 3'-dephospho-CoA + diphosphate. The protein operates within cofactor biosynthesis; coenzyme A biosynthesis; CoA from (R)-pantothenate: step 4/5. Its function is as follows. Reversibly transfers an adenylyl group from ATP to 4'-phosphopantetheine, yielding dephospho-CoA (dPCoA) and pyrophosphate. In Thermobifida fusca (strain YX), this protein is Phosphopantetheine adenylyltransferase.